A 543-amino-acid chain; its full sequence is Chaperonin GroEL (543 aa).

Residues 29 to 32 (TLGP), K50, 86 to 90 (DGTTT), G415, and D495 each bind ATP.

The protein belongs to the chaperonin (HSP60) family. As to quaternary structure, forms a cylinder of 14 subunits composed of two heptameric rings stacked back-to-back. Interacts with the co-chaperonin GroES.

Its subcellular location is the cytoplasm. The enzyme catalyses ATP + H2O + a folded polypeptide = ADP + phosphate + an unfolded polypeptide.. In terms of biological role, together with its co-chaperonin GroES, plays an essential role in assisting protein folding. The GroEL-GroES system forms a nano-cage that allows encapsulation of the non-native substrate proteins and provides a physical environment optimized to promote and accelerate protein folding. In Karelsulcia muelleri (strain GWSS) (Sulcia muelleri), this protein is Chaperonin GroEL.